We begin with the raw amino-acid sequence, 1133 residues long: Lysylphosphatidylglycerol biosynthesis bifunctional protein LysX (1133 aa).

The interval 1-626 (MTTVDASPGI…LLHHDGSTPD (626 aa)) is phosphatidylglycerol lysyltransferase. 7 helical membrane-spanning segments follow: residues 43-63 (VPAA…IASV), 82-102 (LFNF…LAAA), 109-129 (IAWL…AVDM), 140-160 (FGEN…VLSY), 177-197 (AVLV…VELF), 233-253 (LNAI…IVLF), and 575-595 (LIPR…LPFS). A lysine--tRNA ligase region spans residues 627 to 1133 (VSGLQTADVD…TLPFPLAKPH (507 aa)). 2 residues coordinate Mg(2+): Asp-1045 and Glu-1052.

It in the N-terminal section; belongs to the LPG synthetase family. This sequence in the C-terminal section; belongs to the class-II aminoacyl-tRNA synthetase family. Mg(2+) is required as a cofactor.

Its subcellular location is the cell membrane. The catalysed reaction is tRNA(Lys) + L-lysine + ATP = L-lysyl-tRNA(Lys) + AMP + diphosphate. It catalyses the reaction L-lysyl-tRNA(Lys) + a 1,2-diacyl-sn-glycero-3-phospho-(1'-sn-glycerol) = a 1,2-diacyl-sn-glycero-3-phospho-1'-(3'-O-L-lysyl)-sn-glycerol + tRNA(Lys). Functionally, catalyzes the production of L-lysyl-tRNA(Lys)transfer and the transfer of a lysyl group from L-lysyl-tRNA(Lys) to membrane-bound phosphatidylglycerol (PG), which produces lysylphosphatidylglycerol (LPG), one of the components of the bacterial membrane with a positive net charge. LPG synthesis contributes to the resistance to cationic antimicrobial peptides (CAMPs) and likely protects M.tuberculosis against the CAMPs produced by competiting microorganisms (bacteriocins). In fact, the modification of anionic phosphatidylglycerol with positively charged L-lysine results in repulsion of the peptides. This Mycobacterium leprae (strain Br4923) protein is Lysylphosphatidylglycerol biosynthesis bifunctional protein LysX (lysX).